Here is a 66-residue protein sequence, read N- to C-terminus: Large ribosomal subunit protein bL35 (66 aa).

It belongs to the bacterial ribosomal protein bL35 family.

The protein is Large ribosomal subunit protein bL35 of Borreliella burgdorferi (strain ATCC 35210 / DSM 4680 / CIP 102532 / B31) (Borrelia burgdorferi).